We begin with the raw amino-acid sequence, 545 residues long: Threonine--tRNA ligase catalytic subunit (545 aa).

The catalytic stretch occupies residues 139-433; sequence DHRLIGEKLD…LLEHFKGKLP (295 aa). Zn(2+)-binding residues include cysteine 231, histidine 282, and histidine 410.

This sequence belongs to the class-II aminoacyl-tRNA synthetase family. As to quaternary structure, homodimer. Probably interacts with its editing subunit. It depends on Zn(2+) as a cofactor.

Its subcellular location is the cytoplasm. The enzyme catalyses tRNA(Thr) + L-threonine + ATP = L-threonyl-tRNA(Thr) + AMP + diphosphate + H(+). Its function is as follows. Catalyzes the attachment of threonine to tRNA(Thr) in a two-step reaction: L-threonine is first activated by ATP to form Thr-AMP and then transferred to the acceptor end of tRNA(Thr). Also activates L-serine and transfers it to tRNA(Thr) but cannot deacylate incorrectly charged amino acid; unlike most archaea the editing function is found in a freestanding protein. This Saccharolobus islandicus (strain M.16.4 / Kamchatka #3) (Sulfolobus islandicus) protein is Threonine--tRNA ligase catalytic subunit.